A 332-amino-acid chain; its full sequence is Fructose-1,6-bisphosphatase class 1 (332 aa).

Glu-89, Asp-110, Leu-112, and Asp-113 together coordinate Mg(2+). Residues Asp-113–Ser-116, Asn-206, Tyr-239, Tyr-257–Tyr-259, and Lys-269 each bind substrate. Glu-275 lines the Mg(2+) pocket.

It belongs to the FBPase class 1 family. As to quaternary structure, homotetramer. The cofactor is Mg(2+).

It localises to the cytoplasm. The catalysed reaction is beta-D-fructose 1,6-bisphosphate + H2O = beta-D-fructose 6-phosphate + phosphate. It participates in carbohydrate biosynthesis; gluconeogenesis. This is Fructose-1,6-bisphosphatase class 1 from Erwinia tasmaniensis (strain DSM 17950 / CFBP 7177 / CIP 109463 / NCPPB 4357 / Et1/99).